The primary structure comprises 259 residues: NAD kinase (259 aa).

Asp-49 functions as the Proton acceptor in the catalytic mechanism. NAD(+)-binding positions include 49-50 (DG), Arg-54, 118-119 (NE), Asp-148, Ala-156, 159-164 (TAYNYS), and Ala-183.

It belongs to the NAD kinase family. A divalent metal cation is required as a cofactor.

It localises to the cytoplasm. It carries out the reaction NAD(+) + ATP = ADP + NADP(+) + H(+). Its function is as follows. Involved in the regulation of the intracellular balance of NAD and NADP, and is a key enzyme in the biosynthesis of NADP. Catalyzes specifically the phosphorylation on 2'-hydroxyl of the adenosine moiety of NAD to yield NADP. The sequence is that of NAD kinase from Xylella fastidiosa (strain Temecula1 / ATCC 700964).